We begin with the raw amino-acid sequence, 279 residues long: Thymidylate synthase (279 aa).

Arg132–Arg133 provides a ligand contact to dUMP. The Nucleophile role is filled by Cys153. DUMP is bound by residues Arg178–Asp181, Asn189, and His219–Tyr221. Asp181 contributes to the (6R)-5,10-methylene-5,6,7,8-tetrahydrofolate binding site. A (6R)-5,10-methylene-5,6,7,8-tetrahydrofolate-binding site is contributed by Ala278.

Belongs to the thymidylate synthase family. Bacterial-type ThyA subfamily. As to quaternary structure, homodimer.

It is found in the cytoplasm. The catalysed reaction is dUMP + (6R)-5,10-methylene-5,6,7,8-tetrahydrofolate = 7,8-dihydrofolate + dTMP. It participates in pyrimidine metabolism; dTTP biosynthesis. Functionally, catalyzes the reductive methylation of 2'-deoxyuridine-5'-monophosphate (dUMP) to 2'-deoxythymidine-5'-monophosphate (dTMP) while utilizing 5,10-methylenetetrahydrofolate (mTHF) as the methyl donor and reductant in the reaction, yielding dihydrofolate (DHF) as a by-product. This enzymatic reaction provides an intracellular de novo source of dTMP, an essential precursor for DNA biosynthesis. This is Thymidylate synthase from Lactococcus lactis subsp. lactis (strain IL1403) (Streptococcus lactis).